We begin with the raw amino-acid sequence, 307 residues long: Protease HtpX homolog (307 aa).

2 helical membrane passes run valine 10 to leucine 30 and isoleucine 40 to valine 60. Histidine 144 lines the Zn(2+) pocket. Glutamate 145 is a catalytic residue. Histidine 148 provides a ligand contact to Zn(2+). 2 consecutive transmembrane segments (helical) span residues leucine 156–phenylalanine 176 and phenylalanine 187–glycine 207. Glutamate 213 lines the Zn(2+) pocket.

It belongs to the peptidase M48B family. Zn(2+) serves as cofactor.

The protein resides in the cell membrane. In Picrophilus torridus (strain ATCC 700027 / DSM 9790 / JCM 10055 / NBRC 100828 / KAW 2/3), this protein is Protease HtpX homolog.